Consider the following 118-residue polypeptide: Small ribosomal subunit protein uS13 (118 aa).

The interval Asn-94–Arg-118 is disordered. Over residues Ala-106–Arg-118 the composition is skewed to basic residues.

This sequence belongs to the universal ribosomal protein uS13 family. Part of the 30S ribosomal subunit. Forms a loose heterodimer with protein S19. Forms two bridges to the 50S subunit in the 70S ribosome.

Located at the top of the head of the 30S subunit, it contacts several helices of the 16S rRNA. In the 70S ribosome it contacts the 23S rRNA (bridge B1a) and protein L5 of the 50S subunit (bridge B1b), connecting the 2 subunits; these bridges are implicated in subunit movement. Contacts the tRNAs in the A and P-sites. In Psychrobacter sp. (strain PRwf-1), this protein is Small ribosomal subunit protein uS13.